We begin with the raw amino-acid sequence, 297 residues long: Acetylglutamate kinase (297 aa).

Substrate-binding positions include 70 to 71, Arg92, and Asn194; that span reads GG.

This sequence belongs to the acetylglutamate kinase family. ArgB subfamily.

The protein localises to the cytoplasm. The enzyme catalyses N-acetyl-L-glutamate + ATP = N-acetyl-L-glutamyl 5-phosphate + ADP. The protein operates within amino-acid biosynthesis; L-arginine biosynthesis; N(2)-acetyl-L-ornithine from L-glutamate: step 2/4. In terms of biological role, catalyzes the ATP-dependent phosphorylation of N-acetyl-L-glutamate. This is Acetylglutamate kinase from Herminiimonas arsenicoxydans.